The sequence spans 249 residues: Protein obstructor-E (249 aa).

The first 21 residues, 1 to 21 (MAKILISALLCVAMFGSMALG), serve as a signal peptide directing secretion. The region spanning 22 to 80 (SPECPTPNGRFASGDQCDSYTECQDGTPVEKLCPDGLLFHQRTKATGECTYAPYSTCKE) is the Chitin-binding type-2 1 domain. Cys-54 and Cys-70 are oxidised to a cystine. An N-linked (GlcNAc...) asparagine glycan is attached at Asn-88. 2 Chitin-binding type-2 domains span residues 90–148 (TEEC…SCNA) and 170–227 (VDVS…ECYA). Disulfide bonds link Cys-124–Cys-137 and Cys-203–Cys-216.

As to expression, uniformly expressed throughout the cuticle of third instar larva.

The protein resides in the secreted. Its subcellular location is the extracellular space. It is found in the extracellular matrix. Its function is as follows. Chitin-binding protein that is important for the longitudinal contraction and lateral expansion of the larval cuticle during its conversion into the oval-shaped puparium case. Essential for survival to the second instar larval stage. Confers the orientated contractility and expandability of the larval cuticle by regulating the arrangement of chitin and the formation of supracellular ridges on the cuticle of third instar larvae. Essential for determining pupal body shape; required for the orientated shape change of the cuticle during metamorphosis which involves changes in the morphology of the supracellular ridges. Functionally, mainly involved in regulating pupal shape. Mainly involved in larvae survival, possibly by maintaining the normal morphology of the larval hindgut during development. The chain is Protein obstructor-E from Drosophila melanogaster (Fruit fly).